Consider the following 127-residue polypeptide: Fatty acid-binding protein, liver (127 aa).

Methionine 1 carries the post-translational modification N-acetylmethionine. Phosphoserine is present on serine 11. N6-succinyllysine is present on residues lysine 31 and lysine 36. Serine 39 carries the post-translational modification Phosphoserine. N6-succinyllysine is present on lysine 46. Threonine 51 is modified (phosphothreonine). Residue serine 56 is modified to Phosphoserine. An N6-succinyllysine mark is found at lysine 57, lysine 78, and lysine 90. Serine 100 carries the phosphoserine modification. Lysine 121 bears the N6-succinyllysine mark.

Belongs to the calycin superfamily. Fatty-acid binding protein (FABP) family. As to quaternary structure, monomer.

Its subcellular location is the cytoplasm. Its function is as follows. Plays a role in lipoprotein-mediated cholesterol uptake in hepatocytes. Binds cholesterol. Binds free fatty acids and their coenzyme A derivatives, bilirubin, and some other small molecules in the cytoplasm. May be involved in intracellular lipid transport. The polypeptide is Fatty acid-binding protein, liver (FABP1) (Sus scrofa (Pig)).